An 825-amino-acid polypeptide reads, in one-letter code: Glycerol-3-phosphate acyltransferase (825 aa).

The HXXXXD motif signature appears at 306–311; it reads CHRSHM. Positions 802–825 are disordered; it reads SASSSTEMEASTSSSQTAEETTQG.

Belongs to the GPAT/DAPAT family.

The protein localises to the cell inner membrane. The catalysed reaction is sn-glycerol 3-phosphate + an acyl-CoA = a 1-acyl-sn-glycero-3-phosphate + CoA. It participates in phospholipid metabolism; CDP-diacylglycerol biosynthesis; CDP-diacylglycerol from sn-glycerol 3-phosphate: step 1/3. The protein is Glycerol-3-phosphate acyltransferase of Pectobacterium atrosepticum (strain SCRI 1043 / ATCC BAA-672) (Erwinia carotovora subsp. atroseptica).